Reading from the N-terminus, the 543-residue chain is Cyclohexanone 1,2-monooxygenase (543 aa).

6 residues coordinate FAD: F16, D37, W46, D57, Y63, and V110.

It belongs to the FAD-binding monooxygenase family. The cofactor is FAD.

It carries out the reaction cyclohexanone + NADPH + O2 + H(+) = hexano-6-lactone + NADP(+) + H2O. The polypeptide is Cyclohexanone 1,2-monooxygenase (Acinetobacter sp).